The sequence spans 312 residues: MENYNQTSTDFILLGLFPPSKIGLFLFILFVLIFLMALIGNLSMILLIFLDTHLHTPMYFLLSQLSLIDLNYISTIVPKMASDFLYGNKSISFIGCGIQSFFFMTFAGAEALLLTSMAYDRYVAICFPLHYPIRMSKRMYVLMITGSWMIGSINSCAHTVYAFRIPYCKSRAINHFFCDVPAMLTLACTDTWVYEYTVFLSSTIFLVFPFTGIACSYGWVLLAVYRMHSAEGRKKAYSTCSTHLTVVTFYYAPFAYTYLCPRSLRSLTEDKVLAVFYTILTPMLNPIIYSLRNKEVMGALTRVIQNIFSVKM.

The Extracellular portion of the chain corresponds to 1–24; it reads MENYNQTSTDFILLGLFPPSKIGL. Asparagine 5 carries N-linked (GlcNAc...) asparagine glycosylation. Residues 25–48 traverse the membrane as a helical segment; that stretch reads FLFILFVLIFLMALIGNLSMILLI. Over 49–56 the chain is Cytoplasmic; the sequence is FLDTHLHT. A helical transmembrane segment spans residues 57-78; the sequence is PMYFLLSQLSLIDLNYISTIVP. Topologically, residues 79–99 are extracellular; that stretch reads KMASDFLYGNKSISFIGCGIQ. Cysteine 96 and cysteine 188 are oxidised to a cystine. The chain crosses the membrane as a helical span at residues 100–119; that stretch reads SFFFMTFAGAEALLLTSMAY. Topologically, residues 120–138 are cytoplasmic; sequence DRYVAICFPLHYPIRMSKR. Residues 139-157 traverse the membrane as a helical segment; that stretch reads MYVLMITGSWMIGSINSCA. Residues 158 to 194 lie on the Extracellular side of the membrane; sequence HTVYAFRIPYCKSRAINHFFCDVPAMLTLACTDTWVY. The helical transmembrane segment at 195 to 218 threads the bilayer; that stretch reads EYTVFLSSTIFLVFPFTGIACSYG. Residues 219-235 lie on the Cytoplasmic side of the membrane; sequence WVLLAVYRMHSAEGRKK. The helical transmembrane segment at 236-258 threads the bilayer; sequence AYSTCSTHLTVVTFYYAPFAYTY. Residues 259–271 lie on the Extracellular side of the membrane; that stretch reads LCPRSLRSLTEDK. The chain crosses the membrane as a helical span at residues 272–291; it reads VLAVFYTILTPMLNPIIYSL. At 292-312 the chain is on the cytoplasmic side; it reads RNKEVMGALTRVIQNIFSVKM.

Belongs to the G-protein coupled receptor 1 family.

The protein resides in the cell membrane. Functionally, odorant receptor. This is Olfactory receptor 2L5 (OR2L5) from Homo sapiens (Human).